Consider the following 224-residue polypeptide: Uracil-DNA glycosylase 2 (224 aa).

The Proton acceptor role is filled by Asp64.

Belongs to the uracil-DNA glycosylase (UDG) superfamily. UNG family.

The protein localises to the cytoplasm. It catalyses the reaction Hydrolyzes single-stranded DNA or mismatched double-stranded DNA and polynucleotides, releasing free uracil.. In terms of biological role, excises uracil residues from the DNA which can arise as a result of misincorporation of dUMP residues by DNA polymerase or due to deamination of cytosine. This is Uracil-DNA glycosylase 2 from Listeria innocua serovar 6a (strain ATCC BAA-680 / CLIP 11262).